A 62-amino-acid polypeptide reads, in one-letter code: Protein YmcF (62 aa).

This sequence belongs to the YmcF/YnqF peptide family.

This chain is Protein YmcF, found in Escherichia coli (strain K12).